The primary structure comprises 591 residues: Mono(ADP-ribosyl)transferase SpvB (591 aa).

Positions 373 to 576 (PMMGGNSSRP…LRLSDDATAD (204 aa)) constitute a TR mART core domain. NAD(+) contacts are provided by residues Arg414 and 471 to 477 (RGLKLDK). Residues Arg471, Ser501, and Glu538 contribute to the active site. Glu538 serves as a coordination point for NAD(+).

The protein belongs to the SpvB family.

The protein resides in the secreted. It catalyses the reaction L-arginyl-[protein] + NAD(+) = N(omega)-(ADP-D-ribosyl)-L-arginyl-[protein] + nicotinamide + H(+). With respect to regulation, inhibited by novobiocin. Its function is as follows. Mono-ADP-ribosylates eukaryotic muscle and non-muscle actin on 'Arg-177'. ADP-ribosylates all actins tested, has more activity on nonmuscle beta/gamma-actin than on muscle alpha-actin. Prefers monomeric G-actin but can weakly ADP-ribosylate F-actin. ADP-ribosylation prevents the polymerization of G-actin to F-actin, causing actin filament depolymerization, destruction of the cytoskeleton and cytotoxicity. Does not possess NAD(+)-glycohydrolase activity, unlike most mART enzymes. The protein is Mono(ADP-ribosyl)transferase SpvB (spvB) of Salmonella typhimurium.